The primary structure comprises 397 residues: Acetyl-CoA acetyltransferase, cytosolic (397 aa).

Met1 carries the N-acetylmethionine modification. Cys92 (acyl-thioester intermediate) is an active-site residue. Lys200 carries the post-translational modification N6-acetyllysine. CoA-binding residues include Arg223 and Ser226. N6-acetyllysine occurs at positions 233 and 235. Ser252 provides a ligand contact to CoA. Cys383 (proton donor/acceptor) is an active-site residue.

Belongs to the thiolase-like superfamily. Thiolase family. In terms of assembly, homotetramer.

It is found in the cytoplasm. The protein localises to the cytosol. The catalysed reaction is 2 acetyl-CoA = acetoacetyl-CoA + CoA. It functions in the pathway lipid metabolism; fatty acid metabolism. Functionally, involved in the biosynthetic pathway of cholesterol. This chain is Acetyl-CoA acetyltransferase, cytosolic (Acat2), found in Mus musculus (Mouse).